Here is a 351-residue protein sequence, read N- to C-terminus: tRNA N6-adenosine threonylcarbamoyltransferase (351 aa).

Positions 111 and 115 each coordinate Fe cation. Residues 134–138 (LVSGG), Asp-167, Gly-180, and Asn-276 contribute to the substrate site. Asp-304 is a Fe cation binding site.

This sequence belongs to the KAE1 / TsaD family. Fe(2+) is required as a cofactor.

It is found in the cytoplasm. It carries out the reaction L-threonylcarbamoyladenylate + adenosine(37) in tRNA = N(6)-L-threonylcarbamoyladenosine(37) in tRNA + AMP + H(+). Required for the formation of a threonylcarbamoyl group on adenosine at position 37 (t(6)A37) in tRNAs that read codons beginning with adenine. Is involved in the transfer of the threonylcarbamoyl moiety of threonylcarbamoyl-AMP (TC-AMP) to the N6 group of A37, together with TsaE and TsaB. TsaD likely plays a direct catalytic role in this reaction. In Marinobacter nauticus (strain ATCC 700491 / DSM 11845 / VT8) (Marinobacter aquaeolei), this protein is tRNA N6-adenosine threonylcarbamoyltransferase.